The chain runs to 81 residues: ATP synthase subunit c (81 aa).

2 consecutive transmembrane segments (helical) span residues 7–27 (AASV…PGIG) and 57–77 (LAFM…LLFA).

This sequence belongs to the ATPase C chain family. As to quaternary structure, F-type ATPases have 2 components, F(1) - the catalytic core - and F(0) - the membrane proton channel. F(1) has five subunits: alpha(3), beta(3), gamma(1), delta(1), epsilon(1). F(0) has four main subunits: a(1), b(1), b'(1) and c(10-14). The alpha and beta chains form an alternating ring which encloses part of the gamma chain. F(1) is attached to F(0) by a central stalk formed by the gamma and epsilon chains, while a peripheral stalk is formed by the delta, b and b' chains.

The protein resides in the cellular thylakoid membrane. In terms of biological role, f(1)F(0) ATP synthase produces ATP from ADP in the presence of a proton or sodium gradient. F-type ATPases consist of two structural domains, F(1) containing the extramembraneous catalytic core and F(0) containing the membrane proton channel, linked together by a central stalk and a peripheral stalk. During catalysis, ATP synthesis in the catalytic domain of F(1) is coupled via a rotary mechanism of the central stalk subunits to proton translocation. Functionally, key component of the F(0) channel; it plays a direct role in translocation across the membrane. A homomeric c-ring of between 10-14 subunits forms the central stalk rotor element with the F(1) delta and epsilon subunits. The sequence is that of ATP synthase subunit c from Synechococcus sp. (strain CC9902).